A 971-amino-acid chain; its full sequence is ATP-dependent helicase NAM7 (971 aa).

The interval 1–22 (MVGSGSHTPYDISNSPSDVNVQ) is disordered. Positions 54–208 (SPSASDNSCA…SKLEAKWRSN (155 aa)) constitute a Upf1 CH-rich domain. A Phosphoserine modification is found at serine 56. Cysteine 62, cysteine 65, cysteine 76, cysteine 79, cysteine 84, histidine 94, histidine 98, histidine 104, cysteine 122, cysteine 125, cysteine 148, and cysteine 152 together coordinate Zn(2+). Residues 62-94 (CAYCGIDSAKCVIKCNSCKKWFCNTKNGTSSSH) are C3H. Positions 76–104 (CNSCKKWFCNTKNGTSSSHIVNHLVLSHH) are CC/SHH/C. A C4 region spans residues 122 to 152 (CYNCGRKNVFLLGFVSAKSEAVVVLLCRIPC). Residues glutamine 413, 433 to 437 (GTGKT), glutamine 601, tyrosine 638, and glutamate 769 contribute to the ATP site. The residue at position 869 (serine 869) is a Phosphoserine.

It belongs to the DNA2/NAM7 helicase family.

The protein resides in the cytoplasm. The catalysed reaction is ATP + H2O = ADP + phosphate + H(+). Its function is as follows. RNA-dependent helicase required for nonsense-mediated decay (NMD) of aberrant mRNAs containing premature stop codons and modulates the expression level of normal mRNAs. Also capable of unwinding double-stranded DNA and translocating on single-stranded DNA. This Saccharomyces cerevisiae (strain ATCC 204508 / S288c) (Baker's yeast) protein is ATP-dependent helicase NAM7 (NAM7).